Here is a 418-residue protein sequence, read N- to C-terminus: AP-3 complex subunit mu-2 (418 aa).

Positions 176–417 (NNEAYFDVVE…MTKAGKFQVR (242 aa)) constitute an MHD domain.

It belongs to the adaptor complexes medium subunit family. Adaptor protein complex 3 (AP-3) is a heterotetramer composed of two large adaptins (delta-type subunit AP3D1 and beta-type subunit AP3B1 or AP3B2), a medium adaptin (mu-type subunit AP3M1 or AP3M2) and a small adaptin (sigma-type subunit APS1 or AP3S2). AP-3 associates with the BLOC-1 complex.

The protein resides in the golgi apparatus. It is found in the cytoplasmic vesicle membrane. Its function is as follows. Component of the adaptor complexes which link clathrin to receptors in coated vesicles. Clathrin-associated protein complexes are believed to interact with the cytoplasmic tails of membrane proteins, leading to their selection and concentration. Ap47 is a subunit of the plasma membrane adaptor. In concert with the BLOC-1 complex, AP-3 is required to target cargos into vesicles assembled at cell bodies for delivery into neurites and nerve terminals. The protein is AP-3 complex subunit mu-2 (Ap3m2) of Rattus norvegicus (Rat).